Consider the following 143-residue polypeptide: MSLSTKDKETVKDLWGHISASADAIGADALGRLLVVYPQTKIYFLHWPDLSPNSPSVKNHGKNIMSGIALAVTKIDDLKSGLNALSEQHAFQLRVDPANFKLLSHCILVVLAIRFPHEFTPEAHVAMDKFFCGVSLALAEKYR.

Position 2 is an N-acetylserine (S2). A Globin domain is found at 2-143; sequence SLSTKDKETV…VSLALAEKYR (142 aa). H60 serves as a coordination point for O2. Residue H89 coordinates heme b.

The protein belongs to the globin family. In terms of assembly, hb1 is a heterotetramer of two alpha-1 chains and two beta-1 chains. As to expression, red blood cells.

Involved in oxygen transport from gills to the various peripheral tissues. This is Hemoglobin subunit alpha-1 from Liparis tunicatus (Kelp snailfish).